A 237-amino-acid polypeptide reads, in one-letter code: Flagellar L-ring protein (237 aa).

A signal peptide spans 1–24; it reads MNRPGFPRFSVLIASLCGITLLSG. Cys-25 carries N-palmitoyl cysteine lipidation. The S-diacylglycerol cysteine moiety is linked to residue Cys-25.

The protein belongs to the FlgH family. The basal body constitutes a major portion of the flagellar organelle and consists of four rings (L,P,S, and M) mounted on a central rod.

The protein resides in the cell outer membrane. The protein localises to the bacterial flagellum basal body. In terms of biological role, assembles around the rod to form the L-ring and probably protects the motor/basal body from shearing forces during rotation. In Pseudomonas syringae pv. tomato (strain ATCC BAA-871 / DC3000), this protein is Flagellar L-ring protein.